The chain runs to 60 residues: EKVCADLVKGAKDKHLRVKGPVRIPTKVLHITTRKSPCGEGTNTWDRFEFRIHKRVIDLI.

Belongs to the universal ribosomal protein uS10 family.

In Zea mays (Maize), this protein is Small ribosomal subunit protein uS10 (RPS20).